The primary structure comprises 333 residues: Dihydroorotate dehydrogenase (quinone) (333 aa).

FMN is bound by residues 56–60 (AGLDK) and Thr-80. A substrate-binding site is contributed by Lys-60. 105-109 (NRMGF) is a substrate binding site. Positions 133 and 166 each coordinate FMN. Position 166 (Asn-166) interacts with substrate. The Nucleophile role is filled by Ser-169. Asn-171 is a binding site for substrate. 2 residues coordinate FMN: Lys-211 and Thr-239. Position 240-241 (240-241 (NT)) interacts with substrate. FMN-binding positions include Gly-262, Gly-291, and 312 to 313 (YS).

It belongs to the dihydroorotate dehydrogenase family. Type 2 subfamily. Monomer. FMN is required as a cofactor.

It is found in the cell membrane. The enzyme catalyses (S)-dihydroorotate + a quinone = orotate + a quinol. It functions in the pathway pyrimidine metabolism; UMP biosynthesis via de novo pathway; orotate from (S)-dihydroorotate (quinone route): step 1/1. Catalyzes the conversion of dihydroorotate to orotate with quinone as electron acceptor. The sequence is that of Dihydroorotate dehydrogenase (quinone) from Legionella pneumophila (strain Corby).